An 863-amino-acid chain; its full sequence is Glycerol-3-phosphate acyltransferase (863 aa).

Residues 1 to 29 (MPKKNSPLLPKETTTTQSSVDTSGSSNLT) form a disordered region. Polar residues predominate over residues 12–29 (ETTTTQSSVDTSGSSNLT). Positions 343–348 (SHRSHM) match the HXXXXD motif motif.

This sequence belongs to the GPAT/DAPAT family.

It is found in the cell inner membrane. It catalyses the reaction sn-glycerol 3-phosphate + an acyl-CoA = a 1-acyl-sn-glycero-3-phosphate + CoA. The protein operates within phospholipid metabolism; CDP-diacylglycerol biosynthesis; CDP-diacylglycerol from sn-glycerol 3-phosphate: step 1/3. The protein is Glycerol-3-phosphate acyltransferase of Xylella fastidiosa (strain M23).